Consider the following 266-residue polypeptide: Signal peptidase I (266 aa).

Over 1 to 20 (MQTDNTKSNTNKTAKQEWGS) the chain is Cytoplasmic. Residues 21–41 (FVFVICIALLIRILIMEPFTV) form a helical membrane-spanning segment. At 42–266 (PTGSMKATIL…IFRNLYNTDV (225 aa)) the chain is on the periplasmic side. Catalysis depends on residues Ser45 and Lys108.

This sequence belongs to the peptidase S26 family.

The protein localises to the cell inner membrane. It carries out the reaction Cleavage of hydrophobic, N-terminal signal or leader sequences from secreted and periplasmic proteins.. This is Signal peptidase I (lepB) from Rickettsia massiliae (strain Mtu5).